The chain runs to 450 residues: L-lysine-epsilon aminotransferase (450 aa).

2 residues coordinate pyridoxal 5'-phosphate: G127 and A128. The 2-oxoglutarate site is built by R168 and Q274. R168 contributes to the L-lysine binding site. Q274 serves as a coordination point for pyridoxal 5'-phosphate. The residue at position 300 (K300) is an N6-(pyridoxal phosphate)lysine. R423 is a 2-oxoglutarate binding site.

Belongs to the class-III pyridoxal-phosphate-dependent aminotransferase family. The cofactor is pyridoxal 5'-phosphate.

It carries out the reaction L-lysine + 2-oxoglutarate = (S)-2-amino-6-oxohexanoate + L-glutamate. It participates in antibiotic biosynthesis; cephamycin C biosynthesis. Its function is as follows. Catalyzes the transfer of the terminal amino group of L-lysine to alpha-ketoglutarate to yield L-glutamate and 2-aminoadipate 6-semialdehyde ((S)-2-amino-6-oxohexanoate), which is spontaneously converted to the dehydrated form 1-piperideine 6-carboxylate. The polypeptide is L-lysine-epsilon aminotransferase (Amycolatopsis lactamdurans (Nocardia lactamdurans)).